The primary structure comprises 577 residues: Arginine--tRNA ligase (577 aa).

Residues 132–142 (ANPTGPLHVGH) carry the 'HIGH' region motif.

Belongs to the class-I aminoacyl-tRNA synthetase family. As to quaternary structure, monomer.

The protein localises to the cytoplasm. It carries out the reaction tRNA(Arg) + L-arginine + ATP = L-arginyl-tRNA(Arg) + AMP + diphosphate. The sequence is that of Arginine--tRNA ligase from Pelagibacter ubique (strain HTCC1062).